Consider the following 222-residue polypeptide: 7-cyano-7-deazaguanine synthase (222 aa).

Leu8–Leu18 contributes to the ATP binding site. Residues Cys187, Cys197, Cys200, and Cys203 each coordinate Zn(2+).

The protein belongs to the QueC family. Zn(2+) is required as a cofactor.

The enzyme catalyses 7-carboxy-7-deazaguanine + NH4(+) + ATP = 7-cyano-7-deazaguanine + ADP + phosphate + H2O + H(+). It functions in the pathway purine metabolism; 7-cyano-7-deazaguanine biosynthesis. In terms of biological role, catalyzes the ATP-dependent conversion of 7-carboxy-7-deazaguanine (CDG) to 7-cyano-7-deazaguanine (preQ(0)). The sequence is that of 7-cyano-7-deazaguanine synthase from Alcanivorax borkumensis (strain ATCC 700651 / DSM 11573 / NCIMB 13689 / SK2).